Consider the following 204-residue polypeptide: Holliday junction branch migration complex subunit RuvA (204 aa).

A domain I region spans residues 1-64 (MIAKLTGILD…ETDQRLIGFT (64 aa)). The segment at 65-143 (SAGERAWFRL…GLAGYASPVG (79 aa)) is domain II. The segment at 144–154 (PGGEAFVAPPG) is flexible linker. The tract at residues 154–204 (GNASADAVSALQNLGFKPAVASSAVAAAVKELGEDAGLNDLVRVALKRAAG) is domain III.

The protein belongs to the RuvA family. As to quaternary structure, homotetramer. Forms an RuvA(8)-RuvB(12)-Holliday junction (HJ) complex. HJ DNA is sandwiched between 2 RuvA tetramers; dsDNA enters through RuvA and exits via RuvB. An RuvB hexamer assembles on each DNA strand where it exits the tetramer. Each RuvB hexamer is contacted by two RuvA subunits (via domain III) on 2 adjacent RuvB subunits; this complex drives branch migration. In the full resolvosome a probable DNA-RuvA(4)-RuvB(12)-RuvC(2) complex forms which resolves the HJ.

It localises to the cytoplasm. In terms of biological role, the RuvA-RuvB-RuvC complex processes Holliday junction (HJ) DNA during genetic recombination and DNA repair, while the RuvA-RuvB complex plays an important role in the rescue of blocked DNA replication forks via replication fork reversal (RFR). RuvA specifically binds to HJ cruciform DNA, conferring on it an open structure. The RuvB hexamer acts as an ATP-dependent pump, pulling dsDNA into and through the RuvAB complex. HJ branch migration allows RuvC to scan DNA until it finds its consensus sequence, where it cleaves and resolves the cruciform DNA. In Novosphingobium aromaticivorans (strain ATCC 700278 / DSM 12444 / CCUG 56034 / CIP 105152 / NBRC 16084 / F199), this protein is Holliday junction branch migration complex subunit RuvA.